The following is a 374-amino-acid chain: Histidine biosynthesis bifunctional protein HisB (374 aa).

Positions 1–183 are histidinol-phosphatase; it reads MKKKVLFIDR…RVAEFLFAGE (183 aa). The active-site Nucleophile is aspartate 9. Aspartate 9, aspartate 11, and aspartate 131 together coordinate Mg(2+). The Proton donor role is filled by aspartate 11. The tract at residues 184-374 is imidazoleglycerol-phosphate dehydratase; the sequence is RRAEIRRTTK…FELPSSKGVL (191 aa).

The protein in the N-terminal section; belongs to the histidinol-phosphatase family. This sequence in the C-terminal section; belongs to the imidazoleglycerol-phosphate dehydratase family. It depends on Mg(2+) as a cofactor.

Its subcellular location is the cytoplasm. The catalysed reaction is D-erythro-1-(imidazol-4-yl)glycerol 3-phosphate = 3-(imidazol-4-yl)-2-oxopropyl phosphate + H2O. It catalyses the reaction L-histidinol phosphate + H2O = L-histidinol + phosphate. It participates in amino-acid biosynthesis; L-histidine biosynthesis; L-histidine from 5-phospho-alpha-D-ribose 1-diphosphate: step 6/9. The protein operates within amino-acid biosynthesis; L-histidine biosynthesis; L-histidine from 5-phospho-alpha-D-ribose 1-diphosphate: step 8/9. In Bacteroides fragilis (strain ATCC 25285 / DSM 2151 / CCUG 4856 / JCM 11019 / LMG 10263 / NCTC 9343 / Onslow / VPI 2553 / EN-2), this protein is Histidine biosynthesis bifunctional protein HisB.